We begin with the raw amino-acid sequence, 731 residues long: Bifunctional trehalose-6-phosphate synthase/phosphatase (731 aa).

The interval 1-464 (MRLIVVSNRL…WGTDFIYSLI (464 aa)) is alpha,alpha-trehalose-phosphate synthase. Position 9 (Arg-9) interacts with D-glucose 6-phosphate. UDP-alpha-D-glucose is bound at residue 25-26 (GG). 2 residues coordinate D-glucose 6-phosphate: Tyr-89 and Asp-143. UDP-alpha-D-glucose-binding residues include Arg-276 and Lys-281. D-glucose 6-phosphate is bound at residue Arg-314. UDP-alpha-D-glucose is bound at residue 379 to 383 (LVAKE). Residues 465-731 (SAKSAREEVE…RSLLEQLRPP (267 aa)) form a trehalose-6-phosphate phosphatase region. The active-site Nucleophile is the Asp-503. Residues Asp-503, Asp-505, and Asp-684 each coordinate Mg(2+). Residue 503–505 (DYD) coordinates alpha,alpha-trehalose 6-phosphate.

In the N-terminal section; belongs to the glycosyltransferase 20 family. It in the C-terminal section; belongs to the trehalose phosphatase family. As to quaternary structure, may interact with the putative glycosyltransferase (GT) TTX_1305. TTX_1305 is required for the trehalose-6-phosphate synthase activity of tpsp. The cofactor is Mg(2+).

The catalysed reaction is D-glucose 6-phosphate + UDP-alpha-D-glucose = alpha,alpha-trehalose 6-phosphate + UDP + H(+). The enzyme catalyses alpha,alpha-trehalose 6-phosphate + H2O = alpha,alpha-trehalose + phosphate. Its pathway is glycan biosynthesis; trehalose biosynthesis. Functionally, bifunctional enzyme which catalyzes the transfer of glucose from UDP-alpha-D-glucose to glucose-6-phosphate to form trehalose-6-phosphate (Tre6P) and removes the phosphate from Tre6P to produce free trehalose. This Thermoproteus tenax (strain ATCC 35583 / DSM 2078 / JCM 9277 / NBRC 100435 / Kra 1) protein is Bifunctional trehalose-6-phosphate synthase/phosphatase.